The following is a 278-amino-acid chain: Secoisolariciresinol dehydrogenase (278 aa).

Residues glycine 23 to isoleucine 28, aspartate 47, valine 73, and asparagine 99 contribute to the NAD(+) site. Substrate is bound by residues serine 104 and serine 164. Tyrosine 167 (proton donor/acceptor) is an active-site residue. NAD(+) contacts are provided by lysine 171 and valine 200.

Belongs to the short-chain dehydrogenases/reductases (SDR) family. In terms of assembly, homotetramer.

It carries out the reaction (-)-secoisolariciresinol + 2 NAD(+) = (-)-matairesinol + 2 NADH + 2 H(+). Functionally, oxidoreductase involved in lignan biosynthesis. Catalyzes the stereospecific conversion of (-)-secoisolariciresinol to (-)-matairesinol via a lactol intermediate. The protein is Secoisolariciresinol dehydrogenase of Podophyllum peltatum (American mandrake).